The chain runs to 562 residues: DNA ligase (562 aa).

An ATP-binding site is contributed by Glu252. Residue Lys254 is the N6-AMP-lysine intermediate of the active site. Positions 259, 274, 303, 343, 419, and 425 each coordinate ATP.

Belongs to the ATP-dependent DNA ligase family. It depends on Mg(2+) as a cofactor.

The enzyme catalyses ATP + (deoxyribonucleotide)n-3'-hydroxyl + 5'-phospho-(deoxyribonucleotide)m = (deoxyribonucleotide)n+m + AMP + diphosphate.. DNA ligase that seals nicks in double-stranded DNA during DNA replication, DNA recombination and DNA repair. The sequence is that of DNA ligase from Methanococcus aeolicus (strain ATCC BAA-1280 / DSM 17508 / OCM 812 / Nankai-3).